The sequence spans 310 residues: Protease HtpX homolog (310 aa).

2 helical membrane-spanning segments follow: residues 16-36 (NAVLATYCVIFAFIGLLVDVI) and 55-75 (IFPTITIIMFLVAFVIIVVCI). H166 is a binding site for Zn(2+). E167 is a catalytic residue. H170 is a Zn(2+) binding site. Helical transmembrane passes span 182-202 (VGILSNIMLLVANFSVYFFMG) and 214-234 (MILLVLQIILPFLTLLLQMYL). E239 serves as a coordination point for Zn(2+).

This sequence belongs to the peptidase M48B family. The cofactor is Zn(2+).

Its subcellular location is the cell inner membrane. This chain is Protease HtpX homolog, found in Helicobacter pylori (strain Shi470).